A 1449-amino-acid polypeptide reads, in one-letter code: Gag-Pol polyprotein (1449 aa).

A lipid anchor (N-myristoyl glycine; by host) is attached at Gly2. Residues 7–31 are interaction with Gp41; it reads VLTGGKLDQWESIYLRPGGKKKYRM. The segment at 8-43 is interaction with host CALM1; sequence LTGGKLDQWESIYLRPGGKKKYRMKHLVWASRELER. The interaction with host AP3D1 stretch occupies residues 12-19; the sequence is KLDQWESI. The segment at 14-33 is interaction with membrane phosphatidylinositol 4,5-bisphosphate and RNA; the sequence is DQWESIYLRPGGKKKYRMKH. The short motif at 16–22 is the Nuclear export signal element; sequence WESIYLR. Positions 26 to 32 match the Nuclear localization signal motif; that stretch reads KKKYRMK. An interaction with membrane phosphatidylinositol 4,5-bisphosphate region spans residues 73-77; sequence EELRS. At Tyr134 the chain carries Phosphotyrosine; by host. The interval 191-229 is interaction with human PPIA/CYPA and NUP153; the sequence is NTVGGHQAAMQMLKEVINEEAADWDRTHPVPVGPLPPGQ. The interval 279–365 is dimerization/Multimerization of capsid protein p24; the sequence is YSPVSILEIK…GGPAHKARVL (87 aa). 2 consecutive CCHC-type zinc fingers follow at residues 393–410 and 414–431; these read IKCFNCGKEGHLARNCKA and GGCWKCGQEGHQMKDCKN. Residues 447-461 show a composition bias toward basic and acidic residues; that stretch reads ETRKLPPDNNKERAH. A disordered region spans residues 447–489; the sequence is ETRKLPPDNNKERAHSPATRELWVSGGEEHTGEGDAGEPGEDR. Positions 499–503 are dimerization of protease; sequence PQITL. Residues 518-587 enclose the Peptidase A2 domain; the sequence is REALLDTGAD…TPVNIIGRNL (70 aa). Asp523 (for protease activity; shared with dimeric partner) is an active-site residue. Dimerization of protease regions lie at residues 547–553 and 586–598; these read GIGGFIK and NLLTQIGCTLNFP. Residues 641–831 enclose the Reverse transcriptase domain; it reads EGKISRIGPE…PPFLWMGYEL (191 aa). Mg(2+)-binding residues include Asp707, Asp782, and Asp783. An RT 'primer grip' region spans residues 824 to 832; that stretch reads FLWMGYELH. The Tryptophan repeat motif signature appears at 995–1011; sequence WEAWWTDHWQATWIPEW. The 124-residue stretch at 1031 to 1154 folds into the RNase H type-1 domain; it reads ISGAETFYVD…VDKLVSSGIR (124 aa). Positions 1040, 1075, 1095, and 1146 each coordinate Mg(2+). The Integrase-type zinc-finger motif lies at 1160–1201; it reads DGIEKAQEDHDRYHSNWKAMASDFNLPPIVAKEIVASCDKCQ. Zn(2+) contacts are provided by His1169, His1173, Cys1197, and Cys1200. An Integrase catalytic domain is found at 1211-1361; the sequence is VNCSPGVWQL…TAGERIIDII (151 aa). Asp1221, Asp1273, and Glu1309 together coordinate Mg(2+). A DNA-binding region (integrase-type) is located at residues 1380 to 1427; it reads FRVYYRDSRDPIWKGPAKLLWKGEGAVVIQDNGDIKVVPRRKAKIIRD.

In terms of assembly, homotrimer; further assembles as hexamers of trimers. Interacts with gp41 (via C-terminus). Interacts with host CALM1; this interaction induces a conformational change in the Matrix protein, triggering exposure of the myristate group. Interacts with host AP3D1; this interaction allows the polyprotein trafficking to multivesicular bodies during virus assembly. Part of the pre-integration complex (PIC) which is composed of viral genome, matrix protein, Vpr and integrase. As to quaternary structure, homodimer; the homodimer further multimerizes as homohexamers or homopentamers. Interacts with human PPIA/CYPA; This interaction stabilizes the capsid. Interacts with human NUP153. Interacts with host PDZD8; this interaction stabilizes the capsid. Interacts with monkey TRIM5; this interaction destabilizes the capsid. Homodimer, whose active site consists of two apposed aspartic acid residues. In terms of assembly, heterodimer of p66 RT and p51 RT (RT p66/p51). Heterodimerization of RT is essential for DNA polymerase activity. The overall folding of the subdomains is similar in p66 RT and p51 RT but the spatial arrangements of the subdomains are dramatically different. As to quaternary structure, homotetramer; may further associate as a homohexadecamer. Part of the pre-integration complex (PIC) which is composed of viral genome, matrix protein, Vpr and integrase. Interacts with human SMARCB1/INI1 and human PSIP1/LEDGF isoform 1. Interacts with human KPNA3; this interaction might play a role in nuclear import of the pre-integration complex. Interacts with human NUP153; this interaction might play a role in nuclear import of the pre-integration complex. Mg(2+) is required as a cofactor. Specific enzymatic cleavages by the viral protease yield mature proteins. The protease is released by autocatalytic cleavage. The polyprotein is cleaved during and after budding, this process is termed maturation. Proteolytic cleavage of p66 RT removes the RNase H domain to yield the p51 RT subunit. Nucleocapsid protein p7 might be further cleaved after virus entry. In terms of processing, tyrosine phosphorylated presumably in the virion by a host kinase. Phosphorylation is apparently not a major regulator of membrane association. Post-translationally, phosphorylated possibly by host MAPK1; this phosphorylation is necessary for Pin1-mediated virion uncoating. Methylated by host PRMT6, impairing its function by reducing RNA annealing and the initiation of reverse transcription.

It is found in the host cell membrane. It localises to the host endosome. Its subcellular location is the host multivesicular body. The protein resides in the virion membrane. The protein localises to the host nucleus. It is found in the host cytoplasm. It localises to the virion. The catalysed reaction is Specific for a P1 residue that is hydrophobic, and P1' variable, but often Pro.. It carries out the reaction Endohydrolysis of RNA in RNA/DNA hybrids. Three different cleavage modes: 1. sequence-specific internal cleavage of RNA. Human immunodeficiency virus type 1 and Moloney murine leukemia virus enzymes prefer to cleave the RNA strand one nucleotide away from the RNA-DNA junction. 2. RNA 5'-end directed cleavage 13-19 nucleotides from the RNA end. 3. DNA 3'-end directed cleavage 15-20 nucleotides away from the primer terminus.. The enzyme catalyses 3'-end directed exonucleolytic cleavage of viral RNA-DNA hybrid.. It catalyses the reaction DNA(n) + a 2'-deoxyribonucleoside 5'-triphosphate = DNA(n+1) + diphosphate. Its activity is regulated as follows. Protease: The viral protease is inhibited by many synthetic protease inhibitors (PIs), such as amprenavir, atazanavir, indinavir, loprinavir, nelfinavir, ritonavir and saquinavir. Use of protease inhibitors in tritherapy regimens permit more ambitious therapeutic strategies. Reverse transcriptase/ribonuclease H: RT can be inhibited either by nucleoside RT inhibitors (NRTIs) or by non nucleoside RT inhibitors (NNRTIs). NRTIs act as chain terminators, whereas NNRTIs inhibit DNA polymerization by binding a small hydrophobic pocket near the RT active site and inducing an allosteric change in this region. Classical NRTIs are abacavir, adefovir (PMEA), didanosine (ddI), lamivudine (3TC), stavudine (d4T), tenofovir (PMPA), zalcitabine (ddC), and zidovudine (AZT). Classical NNRTIs are atevirdine (BHAP U-87201E), delavirdine, efavirenz (DMP-266), emivirine (I-EBU), and nevirapine (BI-RG-587). The tritherapies used as a basic effective treatment of AIDS associate two NRTIs and one NNRTI. Mediates, with Gag polyprotein, the essential events in virion assembly, including binding the plasma membrane, making the protein-protein interactions necessary to create spherical particles, recruiting the viral Env proteins, and packaging the genomic RNA via direct interactions with the RNA packaging sequence (Psi). Gag-Pol polyprotein may regulate its own translation, by the binding genomic RNA in the 5'-UTR. At low concentration, the polyprotein would promote translation, whereas at high concentration, the polyprotein would encapsidate genomic RNA and then shut off translation. In terms of biological role, targets the polyprotein to the plasma membrane via a multipartite membrane-binding signal, that includes its myristoylated N-terminus. Matrix protein is part of the pre-integration complex. Implicated in the release from host cell mediated by Vpu. Binds to RNA. Its function is as follows. Forms the conical core that encapsulates the genomic RNA-nucleocapsid complex in the virion. Most core are conical, with only 7% tubular. The core is constituted by capsid protein hexamer subunits. The core is disassembled soon after virion entry. Host restriction factors such as TRIM5-alpha or TRIMCyp bind retroviral capsids and cause premature capsid disassembly, leading to blocks in reverse transcription. Capsid restriction by TRIM5 is one of the factors which restricts HIV-1 to the human species. Host PIN1 apparently facilitates the virion uncoating. On the other hand, interactions with PDZD8 or CYPA stabilize the capsid. Functionally, encapsulates and protects viral dimeric unspliced genomic RNA (gRNA). Binds these RNAs through its zinc fingers. Acts as a nucleic acid chaperone which is involved in rearangement of nucleic acid secondary structure during gRNA retrotranscription. Also facilitates template switch leading to recombination. As part of the polyprotein, participates in gRNA dimerization, packaging, tRNA incorporation and virion assembly. Aspartyl protease that mediates proteolytic cleavages of Gag and Gag-Pol polyproteins during or shortly after the release of the virion from the plasma membrane. Cleavages take place as an ordered, step-wise cascade to yield mature proteins. This process is called maturation. Displays maximal activity during the budding process just prior to particle release from the cell. Also cleaves Nef and Vif, probably concomitantly with viral structural proteins on maturation of virus particles. Hydrolyzes host EIF4GI and PABP1 in order to shut off the capped cellular mRNA translation. The resulting inhibition of cellular protein synthesis serves to ensure maximal viral gene expression and to evade host immune response. Also mediates cleavage of host YTHDF3. Mediates cleavage of host CARD8, thereby activating the CARD8 inflammasome, leading to the clearance of latent HIV-1 in patient CD4(+) T-cells after viral reactivation; in contrast, HIV-1 can evade CARD8-sensing when its protease remains inactive in infected cells prior to viral budding. In terms of biological role, multifunctional enzyme that converts the viral RNA genome into dsDNA in the cytoplasm, shortly after virus entry into the cell. This enzyme displays a DNA polymerase activity that can copy either DNA or RNA templates, and a ribonuclease H (RNase H) activity that cleaves the RNA strand of RNA-DNA heteroduplexes in a partially processive 3' to 5' endonucleasic mode. Conversion of viral genomic RNA into dsDNA requires many steps. A tRNA(3)-Lys binds to the primer-binding site (PBS) situated at the 5'-end of the viral RNA. RT uses the 3' end of the tRNA primer to perform a short round of RNA-dependent minus-strand DNA synthesis. The reading proceeds through the U5 region and ends after the repeated (R) region which is present at both ends of viral RNA. The portion of the RNA-DNA heteroduplex is digested by the RNase H, resulting in a ssDNA product attached to the tRNA primer. This ssDNA/tRNA hybridizes with the identical R region situated at the 3' end of viral RNA. This template exchange, known as minus-strand DNA strong stop transfer, can be either intra- or intermolecular. RT uses the 3' end of this newly synthesized short ssDNA to perform the RNA-dependent minus-strand DNA synthesis of the whole template. RNase H digests the RNA template except for two polypurine tracts (PPTs) situated at the 5'-end and near the center of the genome. It is not clear if both polymerase and RNase H activities are simultaneous. RNase H probably can proceed both in a polymerase-dependent (RNA cut into small fragments by the same RT performing DNA synthesis) and a polymerase-independent mode (cleavage of remaining RNA fragments by free RTs). Secondly, RT performs DNA-directed plus-strand DNA synthesis using the PPTs that have not been removed by RNase H as primers. PPTs and tRNA primers are then removed by RNase H. The 3' and 5' ssDNA PBS regions hybridize to form a circular dsDNA intermediate. Strand displacement synthesis by RT to the PBS and PPT ends produces a blunt ended, linear dsDNA copy of the viral genome that includes long terminal repeats (LTRs) at both ends. Its function is as follows. Catalyzes viral DNA integration into the host chromosome, by performing a series of DNA cutting and joining reactions. This enzyme activity takes place after virion entry into a cell and reverse transcription of the RNA genome in dsDNA. The first step in the integration process is 3' processing. This step requires a complex comprising the viral genome, matrix protein, Vpr and integrase. This complex is called the pre-integration complex (PIC). The integrase protein removes 2 nucleotides from each 3' end of the viral DNA, leaving recessed CA OH's at the 3' ends. In the second step, the PIC enters cell nucleus. This process is mediated through integrase and Vpr proteins, and allows the virus to infect a non dividing cell. This ability to enter the nucleus is specific of lentiviruses, other retroviruses cannot and rely on cell division to access cell chromosomes. In the third step, termed strand transfer, the integrase protein joins the previously processed 3' ends to the 5' ends of strands of target cellular DNA at the site of integration. The 5'-ends are produced by integrase-catalyzed staggered cuts, 5 bp apart. A Y-shaped, gapped, recombination intermediate results, with the 5'-ends of the viral DNA strands and the 3' ends of target DNA strands remaining unjoined, flanking a gap of 5 bp. The last step is viral DNA integration into host chromosome. This involves host DNA repair synthesis in which the 5 bp gaps between the unjoined strands are filled in and then ligated. Since this process occurs at both cuts flanking the HIV genome, a 5 bp duplication of host DNA is produced at the ends of HIV-1 integration. Alternatively, Integrase may catalyze the excision of viral DNA just after strand transfer, this is termed disintegration. The chain is Gag-Pol polyprotein (gag-pol) from Human immunodeficiency virus type 1 group N (isolate YBF30) (HIV-1).